Consider the following 155-residue polypeptide: Transcriptional repressor NrdR (155 aa).

A zinc finger lies at 3–34 (CPFCNQTDTKVIDSRLVADGVQVRRRRECQAC). The region spanning 49–139 (PKVIKQDGTR…VYRSFQDISE (91 aa)) is the ATP-cone domain.

It belongs to the NrdR family. Zn(2+) serves as cofactor.

Negatively regulates transcription of bacterial ribonucleotide reductase nrd genes and operons by binding to NrdR-boxes. The polypeptide is Transcriptional repressor NrdR (Teredinibacter turnerae (strain ATCC 39867 / T7901)).